The sequence spans 277 residues: Large ribosomal subunit protein uL2 (277 aa).

Disordered stretches follow at residues 37 to 59 (KNST…GGHK) and 221 to 265 (RGTA…KRTD). Positions 50–59 (TTRHRGGGHK) are enriched in basic residues. Over residues 229-241 (DHPHGGGEGRTGE) the composition is skewed to basic and acidic residues.

The protein belongs to the universal ribosomal protein uL2 family. Part of the 50S ribosomal subunit. Forms a bridge to the 30S subunit in the 70S ribosome.

One of the primary rRNA binding proteins. Required for association of the 30S and 50S subunits to form the 70S ribosome, for tRNA binding and peptide bond formation. It has been suggested to have peptidyltransferase activity; this is somewhat controversial. Makes several contacts with the 16S rRNA in the 70S ribosome. In Chromobacterium violaceum (strain ATCC 12472 / DSM 30191 / JCM 1249 / CCUG 213 / NBRC 12614 / NCIMB 9131 / NCTC 9757 / MK), this protein is Large ribosomal subunit protein uL2.